Here is a 458-residue protein sequence, read N- to C-terminus: Tetracycline resistance protein (458 aa).

12 consecutive transmembrane segments (helical) span residues 12 to 33 (HNQV…EMVL), 81 to 100 (LLLF…FVGH), 111 to 129 (FIQG…VVVA), 140 to 162 (AFGL…GGMV), 165 to 185 (YIHW…VPFL), 201 to 221 (MAGI…TTSY), 223 to 240 (FSFL…VQHI), 256 to 276 (VFFV…AGFV), 297 to 317 (GIIF…GLLV), 324 to 344 (YVLT…AFFI), 346 to 365 (AAPW…LSFT), and 432 to 451 (MLIL…LNVY).

The protein belongs to the major facilitator superfamily. TCR/Tet family.

It localises to the cell membrane. Its function is as follows. Resistance to tetracycline by an active tetracycline efflux. This is an energy-dependent process that decreases the accumulation of the antibiotic in whole cells. This protein functions as a metal-tetracycline/H(+) antiporter. The polypeptide is Tetracycline resistance protein (tetB) (Bacillus subtilis (strain 168)).